We begin with the raw amino-acid sequence, 47 residues long: Large ribosomal subunit protein eL40 (47 aa).

The protein belongs to the eukaryotic ribosomal protein eL40 family.

The sequence is that of Large ribosomal subunit protein eL40 from Methanocaldococcus jannaschii (strain ATCC 43067 / DSM 2661 / JAL-1 / JCM 10045 / NBRC 100440) (Methanococcus jannaschii).